The sequence spans 196 residues: ATP-dependent Clp protease proteolytic subunit (196 aa).

Ser-96 (nucleophile) is an active-site residue. The active site involves His-121.

It belongs to the peptidase S14 family. As to quaternary structure, fourteen ClpP subunits assemble into 2 heptameric rings which stack back to back to give a disk-like structure with a central cavity, resembling the structure of eukaryotic proteasomes.

It is found in the cytoplasm. The catalysed reaction is Hydrolysis of proteins to small peptides in the presence of ATP and magnesium. alpha-casein is the usual test substrate. In the absence of ATP, only oligopeptides shorter than five residues are hydrolyzed (such as succinyl-Leu-Tyr-|-NHMec, and Leu-Tyr-Leu-|-Tyr-Trp, in which cleavage of the -Tyr-|-Leu- and -Tyr-|-Trp bonds also occurs).. Cleaves peptides in various proteins in a process that requires ATP hydrolysis. Has a chymotrypsin-like activity. Plays a major role in the degradation of misfolded proteins. This chain is ATP-dependent Clp protease proteolytic subunit, found in Streptococcus equi subsp. zooepidemicus (strain H70).